Consider the following 178-residue polypeptide: MGDPRRLGKKYDTPNHPWIGERIQKEKEISQKYGLVNKKELWKMETQLRNYRRQARKLISDTTTQGGKEAVQLFNVLKRYAILIEEEPTLDHVLSLNIESILERRLQTIVFRKGLAKTPKQARQFIVHGHIAVNGKRVTAPAYLISVAENDAIEYVSNSPMASENHPERTAATSEENQ.

Residues 104–166 (RRLQTIVFRK…SNSPMASENH (63 aa)) form the S4 RNA-binding domain. A disordered region spans residues 158 to 178 (NSPMASENHPERTAATSEENQ).

Belongs to the universal ribosomal protein uS4 family. In terms of assembly, part of the 30S ribosomal subunit. Contacts protein S5. The interaction surface between S4 and S5 is involved in control of translational fidelity.

Functionally, one of the primary rRNA binding proteins, it binds directly to 16S rRNA where it nucleates assembly of the body of the 30S subunit. In terms of biological role, with S5 and S12 plays an important role in translational accuracy. This is Small ribosomal subunit protein uS4 from Methanococcus maripaludis (strain DSM 14266 / JCM 13030 / NBRC 101832 / S2 / LL).